Reading from the N-terminus, the 178-residue chain is N-alpha-acetyltransferase 20 (178 aa).

In terms of domain architecture, N-acetyltransferase spans 2–157 (TTLRAFTCDD…DAYDMRKALS (156 aa)).

This sequence belongs to the acetyltransferase family. ARD1 subfamily. In terms of assembly, component of the N-terminal acetyltransferase B (NatB) complex which is composed of naa20 and naa25.

The protein resides in the cytoplasm. It localises to the nucleus. It carries out the reaction N-terminal L-methionyl-L-asparaginyl-[protein] + acetyl-CoA = N-terminal N(alpha)-acetyl-L-methionyl-L-asparaginyl-[protein] + CoA + H(+). It catalyses the reaction N-terminal L-methionyl-L-glutaminyl-[protein] + acetyl-CoA = N-terminal N(alpha)-acetyl-L-methionyl-L-glutaminyl-[protein] + CoA + H(+). The enzyme catalyses N-terminal L-methionyl-L-aspartyl-[protein] + acetyl-CoA = N-terminal N(alpha)-acetyl-L-methionyl-L-aspartyl-[protein] + CoA + H(+). The catalysed reaction is N-terminal L-methionyl-L-glutamyl-[protein] + acetyl-CoA = N-terminal N(alpha)-acetyl-L-methionyl-L-glutamyl-[protein] + CoA + H(+). Its function is as follows. Catalytic subunit of the NatB complex which catalyzes acetylation of the N-terminal methionine residues of peptides beginning with Met-Asp, Met-Glu, Met-Asn and Met-Gln. Proteins with cell cycle functions are overrepresented in the pool of NatB substrates. Required for maintaining the structure and function of actomyosin fibers and for proper cellular migration. This Danio rerio (Zebrafish) protein is N-alpha-acetyltransferase 20 (naa20).